We begin with the raw amino-acid sequence, 559 residues long: MTTPSKFRDIEIRAPRGTTLTAKSWLTEAPLRMLMNNLDPEVAENPRELVVYGGIGRAARNWECYDRIVETLKQLNDDETLLVQSGKPVGVFKTHANAPRVLIANSNLVPHWATWEHFNELDAKGLAMYGQMTAGSWIYIGSQGIVQGTYETFVEAGRQHYDGNLKGRWVLTAGLGGMGGAQPLAATLAGACSLNIECQQSRIDFRLRSRYVDEQAKDLDDALARIQRYTAEGKAISIALLGNAAEILPELVRRGVRPDMVTDQTSAHDPLNGYLPAGWSWEEYRDRAQTDPAAVVKAAKQSMAVHVRAMLAFQQQGVPTFDYGNNIRQMAKEEGVANAFDFPGFVPAYIRPLFCRGIGPFRWAALSGDPQDIYKTDAKVKQLIPDDAHLHRWLDMARERISFQGLPARICWVGLGLRAKLGLAFNEMVRSGELSAPIVIGRDHLDSGSVASPNRETEAMQDGSDAVSDWPLLNALLNTASGATWVSLHHGGGVGMGFSQHSGMVIVCDGSDEAAERIARVLTNDPGTGVMRHADAGYQVAIDCAKEQGLNLPMITAQR.

NAD(+)-binding positions include G53–G54, Q131, G177–G179, E197, R202, N243–A244, Q264–H268, Y274–L275, and Y323. C411 is an active-site residue. G493 serves as a coordination point for NAD(+).

Belongs to the urocanase family. The cofactor is NAD(+).

It is found in the cytoplasm. The catalysed reaction is 4-imidazolone-5-propanoate = trans-urocanate + H2O. Its pathway is amino-acid degradation; L-histidine degradation into L-glutamate; N-formimidoyl-L-glutamate from L-histidine: step 2/3. Its function is as follows. Catalyzes the conversion of urocanate to 4-imidazolone-5-propionate. This is Urocanate hydratase from Pseudomonas aeruginosa (strain LESB58).